The chain runs to 2207 residues: Kinetochore-associated protein 1 (2207 aa).

T13 carries the post-translational modification Phosphothreonine. S15 is modified (phosphoserine). Positions 1024–1045 are disordered; the sequence is EAAQAEHKHRGPPGPTPARGTH.

As to quaternary structure, interacts with ZW10. This interaction is required for stable association with the kinetochore. Component of the RZZ complex composed of KNTC1/ROD, ZW10 and ZWILCH.

The protein resides in the cytoplasm. The protein localises to the nucleus. It is found in the chromosome. It localises to the centromere. Its subcellular location is the kinetochore. The protein resides in the cytoskeleton. The protein localises to the spindle. Its function is as follows. Essential component of the mitotic checkpoint, which prevents cells from prematurely exiting mitosis. Required for the assembly of the dynein-dynactin and MAD1-MAD2 complexes onto kinetochores. Its function related to the spindle assembly machinery is proposed to depend on its association in the mitotic RZZ complex. The polypeptide is Kinetochore-associated protein 1 (Kntc1) (Mus musculus (Mouse)).